The following is a 274-amino-acid chain: UPF0173 metal-dependent hydrolase AnaeK_1127 (274 aa).

The protein belongs to the UPF0173 family.

This is UPF0173 metal-dependent hydrolase AnaeK_1127 from Anaeromyxobacter sp. (strain K).